We begin with the raw amino-acid sequence, 92 residues long: Probable K(+)/H(+) antiporter subunit F (92 aa).

3 helical membrane-spanning segments follow: residues 4-24 (AVVWSVLVAQTMLALAMAFAL), 36-56 (RILGLDTLYINAMLMLITFGI), and 62-82 (VYFETALIIAVIGFASSIALA).

This sequence belongs to the CPA3 antiporters (TC 2.A.63) subunit F family. May form a hetero-oligomeric complex that consists of six subunits: PhaAB, PhaC, PhaD, PhaE, PhaF and PhaG.

It localises to the cell membrane. Functionally, part of a K(+) efflux system which is required for the adaptation of R.meliloti to alkaline pH as well as for the infection process during symbiotic nodule development. In Rhizobium meliloti (strain 1021) (Ensifer meliloti), this protein is Probable K(+)/H(+) antiporter subunit F (phaF).